A 364-amino-acid chain; its full sequence is 3-isopropylmalate dehydrogenase (364 aa).

79–90 (GPKWGTGSVRPE) provides a ligand contact to NAD(+). Substrate contacts are provided by Arg97, Arg107, Arg136, and Asp225. Residues Asp225, Asp250, and Asp254 each coordinate Mg(2+). An NAD(+)-binding site is contributed by 289 to 300 (GSAPDLPKNKVN).

This sequence belongs to the isocitrate and isopropylmalate dehydrogenases family. Homodimer. Mg(2+) serves as cofactor. The cofactor is Mn(2+).

The protein resides in the cytoplasm. The enzyme catalyses (2R,3S)-3-isopropylmalate + NAD(+) = 4-methyl-2-oxopentanoate + CO2 + NADH. It participates in amino-acid biosynthesis; L-leucine biosynthesis; L-leucine from 3-methyl-2-oxobutanoate: step 3/4. Its function is as follows. Catalyzes the oxidation of 3-carboxy-2-hydroxy-4-methylpentanoate (3-isopropylmalate) to 3-carboxy-4-methyl-2-oxopentanoate. The product decarboxylates to 4-methyl-2 oxopentanoate. In Saccharomyces cerevisiae (strain ATCC 204508 / S288c) (Baker's yeast), this protein is 3-isopropylmalate dehydrogenase (LEU2).